The sequence spans 326 residues: Malate dehydrogenase (326 aa).

An NAD(+)-binding site is contributed by 12-18; sequence GGTGQIA. Substrate-binding residues include arginine 93 and arginine 99. NAD(+) is bound by residues asparagine 106, glutamine 113, and 130-132; that span reads VGN. Asparagine 132 and arginine 163 together coordinate substrate. Histidine 188 (proton acceptor) is an active-site residue.

This sequence belongs to the LDH/MDH superfamily. MDH type 2 family.

The catalysed reaction is (S)-malate + NAD(+) = oxaloacetate + NADH + H(+). Its function is as follows. Catalyzes the reversible oxidation of malate to oxaloacetate. In Chlamydia trachomatis serovar A (strain ATCC VR-571B / DSM 19440 / HAR-13), this protein is Malate dehydrogenase.